Reading from the N-terminus, the 394-residue chain is Maltose permease (394 aa).

Topologically, residues 1–11 are cytoplasmic; sequence MGAAFKWGAAA. Residues 12–38 traverse the membrane as a helical segment; the sequence is RKTVFPLFYFLIFFAFGALFPLLSVYL. Residues 39-45 are Extracellular-facing; it reads QEEARLS. The chain crosses the membrane as a helical span at residues 46 to 74; that stretch reads GAAIGWIMSLPPIVTMAAQPLWGTAADYT. Residues 75 to 78 are Cytoplasmic-facing; the sequence is RKPV. The chain crosses the membrane as a helical span at residues 79–104; the sequence is GLLLAALVLAALFGVMYALAGSYRLF. Residues 105 to 108 lie on the Extracellular side of the membrane; the sequence is VVLT. The helical transmembrane segment at 109–126 threads the bilayer; that stretch reads VLLSAMQSAIVPLSDSLA. At 127–137 the chain is on the cytoplasmic side; it reads LRHVHEQGGNY. The helical transmembrane segment at 138-160 threads the bilayer; the sequence is GAIRLWGSLGFAMAVLAVGWLSD. Over 161-163 the chain is Extracellular; the sequence is HIA. A helical membrane pass occupies residues 164-183; it reads FAVIFYAFSLALLTAAALAT. Residues 184-213 are Cytoplasmic-facing; that stretch reads RLPRYPMGAPGALTRQDVRGLLASRPFRLL. A helical membrane pass occupies residues 214-233; sequence LVATFLLFGPILANNSYFGL. Topologically, residues 234–237 are extracellular; that stretch reads LIHE. A helical transmembrane segment spans residues 238–262; it reads LGGTLTGIGLAFLFAAGSEAPFMKA. Topologically, residues 263–272 are cytoplasmic; the sequence is ADRLIGRFGM. Residues 273–292 traverse the membrane as a helical segment; sequence VRLLLLAALISAARWLAYAA. Topologically, residues 293 to 295 are extracellular; it reads DPP. Residues 296 to 318 form a helical membrane-spanning segment; it reads LWFVYMTTVVQGCSVGLAIPTAL. Residues 319-330 are Cytoplasmic-facing; that stretch reads QYARRLAPERVQ. A helical membrane pass occupies residues 331–358; it reads STAVALYSAVGNGLGAWFCTLVGGYLLE. Topologically, residues 359–361 are extracellular; sequence RWQ. The helical transmembrane segment at 362 to 382 threads the bilayer; the sequence is IGAVYLFFSICTIVGVLVLLL. Over 383–394 the chain is Cytoplasmic; sequence LAKRERTAGEEK.

It belongs to the major facilitator superfamily.

It is found in the cell membrane. High affinity transport of maltose. This chain is Maltose permease (malA), found in Geobacillus stearothermophilus (Bacillus stearothermophilus).